A 166-amino-acid chain; its full sequence is MSLNIETKKVAVEEISAAIANAQTLVVAEYRGISVSSMTELRANARKEGVYLRVLKNTLARRAVQGTSFVELADQMVGPLVYAASEDAVAAAKVLHQFAKKDDKIVVKAGSYNGEVMNAAQVAELASIPSREELLSKLLFVMQAPVSGFARGLAALAEKKAGEEAA.

This sequence belongs to the universal ribosomal protein uL10 family. As to quaternary structure, part of the ribosomal stalk of the 50S ribosomal subunit. The N-terminus interacts with L11 and the large rRNA to form the base of the stalk. The C-terminus forms an elongated spine to which L12 dimers bind in a sequential fashion forming a multimeric L10(L12)X complex.

Its function is as follows. Forms part of the ribosomal stalk, playing a central role in the interaction of the ribosome with GTP-bound translation factors. The chain is Large ribosomal subunit protein uL10 from Neisseria gonorrhoeae (strain ATCC 700825 / FA 1090).